The sequence spans 244 residues: Large ribosomal subunit protein uL30 (244 aa).

The disordered stretch occupies residues 1-37 (MAPTKKVPQVPETVLKRRKQRADARTKAAQHKVTVAA).

Belongs to the universal ribosomal protein uL30 family.

In terms of biological role, binds to G-rich structures in 28S rRNA and in mRNAs. Plays a regulatory role in the translation apparatus; inhibits cell-free translation of mRNAs. This Caenorhabditis elegans protein is Large ribosomal subunit protein uL30 (rpl-7).